The primary structure comprises 129 residues: Azurin iso-2 (129 aa).

One can recognise a Plastocyanin-like domain in the interval 1–129 (ASCETTVTSG…MMRGTLKLEE (129 aa)). A disulfide bond links Cys3 and Cys26. His46, Cys112, His117, and Met121 together coordinate Cu cation.

Its subcellular location is the periplasm. This methylothroph organism uses azurin in the oxidation of methylamine. Iso-2 is probably the acceptor of electrons from methylamine dehydrogenase. The chain is Azurin iso-2 from Methylomonas sp. (strain J).